Here is a 142-residue protein sequence, read N- to C-terminus: MKTFLAKKETVQPKWYLIDAAGVPLGRLAVKAANIIRGRHKATYTPTVDTGDYVIVINAAKVALTGKKEEQNEYMFFSGFVGGESRRKVSLMRERHPEFIIEHAVKGMLPKNRIAAKMLTKLRVFGGETHTHEANNPVKVTV.

Belongs to the universal ribosomal protein uL13 family. In terms of assembly, part of the 50S ribosomal subunit.

Functionally, this protein is one of the early assembly proteins of the 50S ribosomal subunit, although it is not seen to bind rRNA by itself. It is important during the early stages of 50S assembly. The sequence is that of Large ribosomal subunit protein uL13 from Opitutus terrae (strain DSM 11246 / JCM 15787 / PB90-1).